A 350-amino-acid polypeptide reads, in one-letter code: Histidinol-phosphate aminotransferase (350 aa).

Residue Lys-210 is modified to N6-(pyridoxal phosphate)lysine.

The protein belongs to the class-II pyridoxal-phosphate-dependent aminotransferase family. Histidinol-phosphate aminotransferase subfamily. As to quaternary structure, homodimer. It depends on pyridoxal 5'-phosphate as a cofactor.

The enzyme catalyses L-histidinol phosphate + 2-oxoglutarate = 3-(imidazol-4-yl)-2-oxopropyl phosphate + L-glutamate. The protein operates within amino-acid biosynthesis; L-histidine biosynthesis; L-histidine from 5-phospho-alpha-D-ribose 1-diphosphate: step 7/9. This chain is Histidinol-phosphate aminotransferase, found in Pseudomonas syringae pv. syringae (strain B728a).